A 283-amino-acid chain; its full sequence is Homeobox-leucine zipper protein HAT2 (283 aa).

The segment at 64–134 (VNCEEDTGVS…GETSRKKLRL (71 aa)) is disordered. Over residues 73–84 (SSPNSTISSTIS) the composition is skewed to low complexity. Positions 127–186 (TSRKKLRLSKDQSAFLEETFKEHNTLNPKQKLALAKKLNLTARQVEVWFQNRRARTKLKQ) form a DNA-binding region, homeobox. The tract at residues 194-215 (LKRCVEKLTEENRRLQKEAMEL) is leucine-zipper.

This sequence belongs to the HD-ZIP homeobox family. Class II subfamily. Interacts with RBR1.

The protein localises to the nucleus. Probable transcription factor that plays a role in auxin-mediated morphogenesis. Negatively regulates lateral root elongation. In Arabidopsis thaliana (Mouse-ear cress), this protein is Homeobox-leucine zipper protein HAT2 (HAT2).